The following is a 180-amino-acid chain: MKGRAEYVYARVLVDLVKDNSEEVSAGIRSLLCACEDRDVRAFFVDPTVPFGVKVAALRDVQKACALDDTLVSFVCVVVEDGLFASLGGIFEKFFALLRRKLGKFNLEIISAAPLTEKEESKILRMLRAQYGDPEAIIRRTDPGILGGFVAKGDTFTVDASYVGQLRELTRISKEAVFSI.

It belongs to the ATPase delta chain family. In terms of assembly, F-type ATPases have 2 components, F(1) - the catalytic core - and F(0) - the membrane proton channel. F(1) has five subunits: alpha(3), beta(3), gamma(1), delta(1), epsilon(1). F(0) has three main subunits: a(1), b(2) and c(10-14). The alpha and beta chains form an alternating ring which encloses part of the gamma chain. F(1) is attached to F(0) by a central stalk formed by the gamma and epsilon chains, while a peripheral stalk is formed by the delta and b chains.

Its subcellular location is the cell inner membrane. In terms of biological role, f(1)F(0) ATP synthase produces ATP from ADP in the presence of a proton or sodium gradient. F-type ATPases consist of two structural domains, F(1) containing the extramembraneous catalytic core and F(0) containing the membrane proton channel, linked together by a central stalk and a peripheral stalk. During catalysis, ATP synthesis in the catalytic domain of F(1) is coupled via a rotary mechanism of the central stalk subunits to proton translocation. Its function is as follows. This protein is part of the stalk that links CF(0) to CF(1). It either transmits conformational changes from CF(0) to CF(1) or is implicated in proton conduction. The polypeptide is ATP synthase subunit delta (Anaplasma phagocytophilum (strain HZ)).